The primary structure comprises 432 residues: Lipoyl synthase, mitochondrial (432 aa).

Positions 32-68 (TLGATPGSTSTSTSTSTATTTTLESTSTSTSGDATET) are enriched in low complexity. Residues 32 to 71 (TLGATPGSTSTSTSTSTATTTTLESTSTSTSGDATETTIK) form a disordered region. The [4Fe-4S] cluster site is built by Cys-150, Cys-155, Cys-161, Cys-180, Cys-184, Cys-187, and Ser-395. In terms of domain architecture, Radical SAM core spans 165-384 (KKSEATATIM…RDVALEMGFL (220 aa)).

Belongs to the radical SAM superfamily. Lipoyl synthase family. [4Fe-4S] cluster serves as cofactor.

The protein localises to the mitochondrion. It carries out the reaction [[Fe-S] cluster scaffold protein carrying a second [4Fe-4S](2+) cluster] + N(6)-octanoyl-L-lysyl-[protein] + 2 oxidized [2Fe-2S]-[ferredoxin] + 2 S-adenosyl-L-methionine + 4 H(+) = [[Fe-S] cluster scaffold protein] + N(6)-[(R)-dihydrolipoyl]-L-lysyl-[protein] + 4 Fe(3+) + 2 hydrogen sulfide + 2 5'-deoxyadenosine + 2 L-methionine + 2 reduced [2Fe-2S]-[ferredoxin]. The protein operates within protein modification; protein lipoylation via endogenous pathway; protein N(6)-(lipoyl)lysine from octanoyl-[acyl-carrier-protein]: step 2/2. Functionally, catalyzes the radical-mediated insertion of two sulfur atoms into the C-6 and C-8 positions of the octanoyl moiety bound to the lipoyl domains of lipoate-dependent enzymes, thereby converting the octanoylated domains into lipoylated derivatives. In Lodderomyces elongisporus (strain ATCC 11503 / CBS 2605 / JCM 1781 / NBRC 1676 / NRRL YB-4239) (Yeast), this protein is Lipoyl synthase, mitochondrial.